Consider the following 900-residue polypeptide: Bifunctional uridylyltransferase/uridylyl-removing enzyme (900 aa).

Residues 1–342 (MPQVDPELFD…PCEQPVQIQP (342 aa)) form a uridylyltransferase region. Positions 343–705 (LNSRFQLRDG…TTQREFESGS (363 aa)) are uridylyl-removing. Residues 461–583 (VDAHTLNLIK…VGDQTHLDYL (123 aa)) form the HD domain. ACT domains follow at residues 706 to 789 (QIFI…IIQR) and 816 to 891 (VLEV…DNGR).

This sequence belongs to the GlnD family. The cofactor is Mg(2+).

It catalyses the reaction [protein-PII]-L-tyrosine + UTP = [protein-PII]-uridylyl-L-tyrosine + diphosphate. The catalysed reaction is [protein-PII]-uridylyl-L-tyrosine + H2O = [protein-PII]-L-tyrosine + UMP + H(+). With respect to regulation, uridylyltransferase (UTase) activity is inhibited by glutamine, while glutamine activates uridylyl-removing (UR) activity. Modifies, by uridylylation and deuridylylation, the PII regulatory proteins (GlnB and homologs), in response to the nitrogen status of the cell that GlnD senses through the glutamine level. Under low glutamine levels, catalyzes the conversion of the PII proteins and UTP to PII-UMP and PPi, while under higher glutamine levels, GlnD hydrolyzes PII-UMP to PII and UMP (deuridylylation). Thus, controls uridylylation state and activity of the PII proteins, and plays an important role in the regulation of nitrogen assimilation and metabolism. This chain is Bifunctional uridylyltransferase/uridylyl-removing enzyme, found in Pseudomonas aeruginosa (strain LESB58).